Reading from the N-terminus, the 260-residue chain is Carbonic anhydrase 2 (260 aa).

At Ser-2 the chain carries N-acetylserine. Residue Ser-2 is modified to Phosphoserine. The 257-residue stretch at 3-259 folds into the Alpha-carbonic anhydrase domain; sequence HHWGYGKHNG…LKNRQVRGFP (257 aa). His-64 (proton donor/acceptor) is an active-site residue. Zn(2+)-binding residues include His-94, His-96, and His-119. Phosphoserine is present on residues Ser-165 and Ser-172. Residue 198–199 participates in substrate binding; it reads TT.

It belongs to the alpha-carbonic anhydrase family. As to quaternary structure, interacts with SLC4A4. Interaction with SLC4A7 regulates SLC4A7 transporter activity. Zn(2+) serves as cofactor.

It localises to the cytoplasm. The protein resides in the cell membrane. It catalyses the reaction hydrogencarbonate + H(+) = CO2 + H2O. The enzyme catalyses urea = cyanamide + H2O. With respect to regulation, inhibited by acetazolamide. Catalyzes the reversible hydration of carbon dioxide. Can also hydrate cyanamide to urea. Involved in the regulation of fluid secretion into the anterior chamber of the eye. Essential for bone resorption and osteoclast differentiation. Contributes to intracellular pH regulation in the duodenal upper villous epithelium during proton-coupled peptide absorption. Stimulates the chloride-bicarbonate exchange activity of SLC26A6. The polypeptide is Carbonic anhydrase 2 (CA2) (Bos taurus (Bovine)).